A 228-amino-acid chain; its full sequence is Phosphoglycolate phosphatase (228 aa).

D12 serves as the catalytic Nucleophile. Residues D12, D14, and D177 each contribute to the Mg(2+) site.

This sequence belongs to the HAD-like hydrolase superfamily. CbbY/CbbZ/Gph/YieH family. Requires Mg(2+) as cofactor.

It catalyses the reaction 2-phosphoglycolate + H2O = glycolate + phosphate. Its pathway is organic acid metabolism; glycolate biosynthesis; glycolate from 2-phosphoglycolate: step 1/1. Functionally, specifically catalyzes the dephosphorylation of 2-phosphoglycolate. Is involved in the dissimilation of the intracellular 2-phosphoglycolate formed during the DNA repair of 3'-phosphoglycolate ends, a major class of DNA lesions induced by oxidative stress. In Vibrio parahaemolyticus serotype O3:K6 (strain RIMD 2210633), this protein is Phosphoglycolate phosphatase.